The sequence spans 141 residues: uncharacterized protein (141 aa).

The protein belongs to the peptidase C56 family.

This is an uncharacterized protein from Streptomyces lividans.